Reading from the N-terminus, the 221-residue chain is N-acetyltransferase 8F1 (221 aa).

Residues 53–73 (LVLVSGSWLLAVVCIFFLLLL) traverse the membrane as a helical segment. One can recognise an N-acetyltransferase domain in the interval 69–219 (FLLLLLRFLA…RTIQLKYPFP (151 aa)).

It belongs to the camello family.

The protein resides in the membrane. May play a role in regulation of gastrulation. The protein is N-acetyltransferase 8F1 of Rattus norvegicus (Rat).